The following is a 73-amino-acid chain: Beta-defensin 39 (73 aa).

The first 23 residues, 1–23, serve as a signal peptide directing secretion; the sequence is MKISCFLLLVLSLSCFQINSVSG. 3 disulfides stabilise this stretch: Cys-29-Cys-58, Cys-36-Cys-51, and Cys-41-Cys-59.

It belongs to the beta-defensin family.

The protein localises to the secreted. Functionally, has antibacterial activity. The protein is Beta-defensin 39 (Defb39) of Rattus norvegicus (Rat).